The sequence spans 2131 residues: Protein Ycf2 (2131 aa).

1466–1473 is an ATP binding site; the sequence is GSIGTGRS.

Belongs to the Ycf2 family.

The protein localises to the plastid. The protein resides in the chloroplast stroma. Functionally, probable ATPase of unknown function. Its presence in a non-photosynthetic plant (Epifagus virginiana) and experiments in tobacco indicate that it has an essential function which is probably not related to photosynthesis. This is Protein Ycf2 from Helianthus annuus (Common sunflower).